A 200-amino-acid chain; its full sequence is Large ribosomal subunit protein bL25 (200 aa).

The protein belongs to the bacterial ribosomal protein bL25 family. CTC subfamily. As to quaternary structure, part of the 50S ribosomal subunit; part of the 5S rRNA/L5/L18/L25 subcomplex. Contacts the 5S rRNA. Binds to the 5S rRNA independently of L5 and L18.

Its function is as follows. This is one of the proteins that binds to the 5S RNA in the ribosome where it forms part of the central protuberance. The polypeptide is Large ribosomal subunit protein bL25 (Nocardia farcinica (strain IFM 10152)).